Here is a 344-residue protein sequence, read N- to C-terminus: NDP-polyphosphate phosphotransferase 2 (344 aa).

The interval 1 to 60 (METAKPIAPQKDSKANGVDATDPVVKVASPQDPAGDAKVEDATAPVAEVEPRTPRNRRLP) is disordered.

The protein belongs to the polyphosphate kinase 2 (PPK2) family. Class I subfamily. Requires Mg(2+) as cofactor.

The enzyme catalyses [phosphate](n) + ATP = [phosphate](n+1) + ADP. It catalyses the reaction [phosphate](n) + CTP = [phosphate](n+1) + CDP. It carries out the reaction [phosphate](n) + GTP = [phosphate](n+1) + GDP. The catalysed reaction is [phosphate](n) + UTP = [phosphate](n+1) + UDP. Uses inorganic polyphosphate (polyP) as a donor to convert NDP to NTP. PolyP hydrolysis is slightly faster with ADP, but it can also use GDP, CDP and UDP. This Ruegeria pomeroyi (strain ATCC 700808 / DSM 15171 / DSS-3) (Silicibacter pomeroyi) protein is NDP-polyphosphate phosphotransferase 2.